Reading from the N-terminus, the 433-residue chain is Phosphomethylpyrimidine synthase (433 aa).

Residues asparagine 66, methionine 94, tyrosine 123, histidine 162, 184 to 186 (SRG), 225 to 228 (DALR), and glutamate 264 contribute to the substrate site. A Zn(2+)-binding site is contributed by histidine 268. A substrate-binding site is contributed by tyrosine 291. Histidine 332 contributes to the Zn(2+) binding site. Positions 408, 411, and 415 each coordinate [4Fe-4S] cluster.

It belongs to the ThiC family. [4Fe-4S] cluster serves as cofactor.

It catalyses the reaction 5-amino-1-(5-phospho-beta-D-ribosyl)imidazole + S-adenosyl-L-methionine = 4-amino-2-methyl-5-(phosphooxymethyl)pyrimidine + CO + 5'-deoxyadenosine + formate + L-methionine + 3 H(+). The protein operates within cofactor biosynthesis; thiamine diphosphate biosynthesis. Catalyzes the synthesis of the hydroxymethylpyrimidine phosphate (HMP-P) moiety of thiamine from aminoimidazole ribotide (AIR) in a radical S-adenosyl-L-methionine (SAM)-dependent reaction. The sequence is that of Phosphomethylpyrimidine synthase from Saccharolobus islandicus (strain M.14.25 / Kamchatka #1) (Sulfolobus islandicus).